A 120-amino-acid chain; its full sequence is Large ribosomal subunit protein uL18 (120 aa).

It belongs to the universal ribosomal protein uL18 family. As to quaternary structure, part of the 50S ribosomal subunit; part of the 5S rRNA/L5/L18/L25 subcomplex. Contacts the 5S and 23S rRNAs.

In terms of biological role, this is one of the proteins that bind and probably mediate the attachment of the 5S RNA into the large ribosomal subunit, where it forms part of the central protuberance. The polypeptide is Large ribosomal subunit protein uL18 (Picosynechococcus sp. (strain ATCC 27264 / PCC 7002 / PR-6) (Agmenellum quadruplicatum)).